We begin with the raw amino-acid sequence, 337 residues long: Alanine racemase (337 aa).

Residue Lys-33 is the Proton acceptor; specific for D-alanine of the active site. Lys-33 carries the post-translational modification N6-(pyridoxal phosphate)lysine. Position 118 (Arg-118) interacts with substrate. The Proton acceptor; specific for L-alanine role is filled by Tyr-246. Met-292 serves as a coordination point for substrate.

This sequence belongs to the alanine racemase family. It depends on pyridoxal 5'-phosphate as a cofactor.

It catalyses the reaction L-alanine = D-alanine. It participates in amino-acid biosynthesis; D-alanine biosynthesis; D-alanine from L-alanine: step 1/1. Catalyzes the interconversion of L-alanine and D-alanine. May also act on other amino acids. In Campylobacter curvus (strain 525.92), this protein is Alanine racemase (alr).